The following is a 296-amino-acid chain: 2-haloacid dehalogenase, configuration-inverting (296 aa).

The protein belongs to the HAD-like hydrolase superfamily. S-2-haloalkanoic acid dehalogenase family.

It catalyses the reaction an (S)-2-haloacid + H2O = a (2R)-2-hydroxycarboxylate + a halide anion + H(+). It carries out the reaction an (R)-2-haloacid + H2O = a (2S)-2-hydroxycarboxylate + a halide anion + H(+). Functionally, dehalogenates both (S)- and (R)-2-haloalkanoic acids to the corresponding (R)- and (S)-hydroxyalkanoic acids, respectively, with inversion of configuration at C-2. Acts on 2-haloalkanoic acids whose carbon chain lengths are five or less. This chain is 2-haloacid dehalogenase, configuration-inverting (dhlC), found in Alcaligenes xylosoxydans xylosoxydans (Achromobacter xylosoxidans).